The following is a 680-amino-acid chain: Putative E3 ubiquitin-protein ligase UNKL (680 aa).

Residues 1–22 form a disordered region; sequence MPSVSKAAAAALSGSPPQTEKP. 4 C3H1-type zinc fingers span residues 75-104, 115-145, 243-277, and 283-310; these read YSPD…HRTT, YYKT…HGPL, QYRS…HSRT, and PEST…HVEK. Low complexity-rich tracts occupy residues 326-337, 375-396, 465-497, and 545-562; these read TSPSSTGSGQPG, VSSS…SPTA, SLPR…VGSS, and SPSP…SASP. 4 disordered regions span residues 326–358, 375–400, 442–520, and 545–566; these read TSPS…QDSK, VSSS…LPAP, DGHD…SAAS, and SPSP…NGAE. Residues 563-619 adopt a coiled-coil conformation; sequence NGAELARVRRQLDEAKRKIRQWEESWQQVKQVCDAWQREAQEAKERARVADSDRQLA. The segment at 639–674 adopts an RING-type zinc-finger fold; the sequence is CVACRERAHGAVLRPCQHHILCEPCAATAPECPYCK.

This sequence belongs to the unkempt family. In terms of assembly, isoform 4 (C-terminal) interacts with the GTP-bound form of RAC1. Isoform 4 (C-terminal) interacts with SMARCD2/BAF60b. Isoform 4 is ubiquitinated in the C-terminal. Ubiquitination is enhanced by activated RAC1. The presence of the RING finger domain is not essential for ubiquitination to occur.

The protein resides in the cytoplasm. Its subcellular location is the nucleus. The protein operates within protein modification; protein ubiquitination. Functionally, may participate in a protein complex showing an E3 ligase activity regulated by RAC1. Ubiquitination is directed towards itself and possibly other substrates, such as SMARCD2/BAF60b. Intrinsic E3 ligase activity has not been proven. The chain is Putative E3 ubiquitin-protein ligase UNKL (UNKL) from Homo sapiens (Human).